Consider the following 321-residue polypeptide: Carnitine monooxygenase reductase subunit (321 aa).

The region spanning 4 to 109 (YQMFEVQVSQ…STPNNLFALI (106 aa)) is the FAD-binding FR-type domain. Residues 233 to 321 (DAFTLVLARS…AKGKRLVLDL (89 aa)) form the 2Fe-2S ferredoxin-type domain. The [2Fe-2S] cluster site is built by Cys270, Cys275, Cys278, and Cys308.

This sequence belongs to the PDR/VanB family. CntB subfamily. Composed of an oxygenase subunit (yeaW) and a reductase subunit (yeaX). The cofactor is FMN. [2Fe-2S] cluster serves as cofactor.

It catalyses the reaction (R)-carnitine + NADH + O2 + H(+) = (3R)-3-hydroxy-4-oxobutanoate + trimethylamine + NAD(+) + H2O. It carries out the reaction (R)-carnitine + NADPH + O2 + H(+) = (3R)-3-hydroxy-4-oxobutanoate + trimethylamine + NADP(+) + H2O. It participates in amine and polyamine metabolism; carnitine metabolism. Functionally, converts carnitine to trimethylamine and malic semialdehyde. Can also use gamma-butyrobetaine, choline and betaine as substrates. The polypeptide is Carnitine monooxygenase reductase subunit (yeaX) (Escherichia coli (strain K12)).